Consider the following 344-residue polypeptide: UDP-3-O-acylglucosamine N-acyltransferase (344 aa).

H248 serves as the catalytic Proton acceptor.

It belongs to the transferase hexapeptide repeat family. LpxD subfamily. In terms of assembly, homotrimer.

It catalyses the reaction a UDP-3-O-[(3R)-3-hydroxyacyl]-alpha-D-glucosamine + a (3R)-hydroxyacyl-[ACP] = a UDP-2-N,3-O-bis[(3R)-3-hydroxyacyl]-alpha-D-glucosamine + holo-[ACP] + H(+). Its pathway is bacterial outer membrane biogenesis; LPS lipid A biosynthesis. Its function is as follows. Catalyzes the N-acylation of UDP-3-O-acylglucosamine using 3-hydroxyacyl-ACP as the acyl donor. Is involved in the biosynthesis of lipid A, a phosphorylated glycolipid that anchors the lipopolysaccharide to the outer membrane of the cell. In Prochlorococcus marinus (strain MIT 9515), this protein is UDP-3-O-acylglucosamine N-acyltransferase.